Here is a 303-residue protein sequence, read N- to C-terminus: Ornithine carbamoyltransferase (303 aa).

Carbamoyl phosphate contacts are provided by residues 52 to 55 (STRT), Gln-79, Arg-103, and 130 to 133 (HPCQ). L-ornithine-binding positions include Asn-161, Asp-222, and 226–227 (SM). Carbamoyl phosphate-binding positions include 262-263 (CL) and Arg-290.

The protein belongs to the aspartate/ornithine carbamoyltransferase superfamily. OTCase family.

It is found in the cytoplasm. It catalyses the reaction carbamoyl phosphate + L-ornithine = L-citrulline + phosphate + H(+). It functions in the pathway amino-acid biosynthesis; L-arginine biosynthesis; L-arginine from L-ornithine and carbamoyl phosphate: step 1/3. In terms of biological role, reversibly catalyzes the transfer of the carbamoyl group from carbamoyl phosphate (CP) to the N(epsilon) atom of ornithine (ORN) to produce L-citrulline. The chain is Ornithine carbamoyltransferase from Geobacter sulfurreducens (strain ATCC 51573 / DSM 12127 / PCA).